The chain runs to 524 residues: Serine/threonine-protein phosphatase 2A 56 kDa regulatory subunit gamma isoform (524 aa).

M1 is modified (N-acetylmethionine). The tract at residues 476–508 (SDEARQAQKELKKDRPLVRRKSELPQDPHTEKA) is disordered.

Belongs to the phosphatase 2A regulatory subunit B56 family. As to quaternary structure, PP2A consists of a common heterodimeric core enzyme, composed of PPP2CA a 36 kDa catalytic subunit (subunit C) and PPP2R1A a 65 kDa constant regulatory subunit (PR65 or subunit A), that associates with a variety of regulatory subunits. Proteins that associate with the core dimer include three families of regulatory subunits B (the R2/B/PR55/B55, R3/B''/PR72/PR130/PR59 and R5/B'/B56 families), the 48 kDa variable regulatory subunit, viral proteins, and cell signaling molecules. Interacts with SGO1. Interacts with SGO1; the interaction is direct. May interact with TP53. Interacts with IER3 and/or ERK kinases; regulates ERK dephosphorylation. Interacts with CIP2A; this interaction stabilizes CIP2A. As to expression, highest levels in heart, liver and brain. Lower levels in skeletal muscle, spleen, kidney and lung. Isoform 4 is testis-specific.

It is found in the nucleus. The protein resides in the chromosome. Its subcellular location is the centromere. The B regulatory subunit might modulate substrate selectivity and catalytic activity, and might also direct the localization of the catalytic enzyme to a particular subcellular compartment. The PP2A-PPP2R5C holoenzyme may activate TP53 and play a role in DNA damage-induced inhibition of cell proliferation. PP2A-PPP2R5C may also regulate the ERK signaling pathway through ERK dephosphorylation. The polypeptide is Serine/threonine-protein phosphatase 2A 56 kDa regulatory subunit gamma isoform (Ppp2r5c) (Mus musculus (Mouse)).